A 90-amino-acid polypeptide reads, in one-letter code: Bombyxin D-1 (90 aa).

The first 18 residues, 1–18, serve as a signal peptide directing secretion; sequence MKLLGFFLSWVSVCAIVS. Cystine bridges form between Cys27–Cys77, Cys39–Cys90, and Cys76–Cys81. Positions 48-68 are cleaved as a propeptide — c peptide like; the sequence is SVAHYAGYGWPLLPSLSEERG.

Belongs to the insulin family. Heterodimer of a B chain and an A chain linked by two disulfide bonds.

Its subcellular location is the secreted. Brain peptide responsible for activation of prothoracic glands to produce ecdysone in insects. The sequence is that of Bombyxin D-1 (BBXD1) from Bombyx mori (Silk moth).